Reading from the N-terminus, the 626-residue chain is MSRFVTSVSALAMLALAPAALSSVAYANDKLVELSKSDDNWVMPGKNYDSNNYSELKQVNKSNVKQLRPAWTFSTGLLNGHEGAPLVVDGKMYVHTSFPNNTFALDLDDPGHILWQDKPKQNPAARAVACCDLVNRGLAYWPGDGKTPALILKTQLDRHVVALNAETGETVWKVENSDIKVGSTLTIAPYVVKDKVIIGSSGAELGVRGYLTAYDVKTGGQVWRAYATGPDKDLLLADDFNVKNAHYGQKGLGTATWEGDAWKIGGGTNWGWYAYDPGTNLIYFGTGNPAPWNETMRPGDNKWTMTIFGRDADTGEAKFGYQKTPHDEWDYAGVNVMMPSEQKDKDGKTRKLLTHPDRNGIVYTLDRTDGALVSANKLDDTVNVFKTVDLKTGQPVRDPEYGTRMDHLAKDVCPSAMGYHNQGHDSYDPKRELFFMGINHICMDWEPFMLPYRAGQFFVGATLNMYPGPKGDRQNYEGLGQIKAYNAITGSYKWEKMERFAVWGGTLATAGDLVFYGTLDGYLKARDSDTGDLLWKFKIPSGAIGYPMTYTHKGTQYVAIYYGVGGWPGVGLVFDLADPTAGLGAVGAFKKLANYTQQGGGVIVFSLDGKGPYDDPNVGEWKSASK.

An N-terminal signal peptide occupies residues M1–A27. A disulfide bridge connects residues C130 and C131. E204 and N288 together coordinate Ca(2+). Catalysis depends on D330, which acts as the Proton acceptor. A disulfide bridge links C413 with C442.

Belongs to the bacterial PQQ dehydrogenase family. As to quaternary structure, heterotetramer composed of 2 alpha and 2 beta subunits. It depends on pyrroloquinoline quinone as a cofactor. Ca(2+) serves as cofactor.

The protein resides in the cell inner membrane. The catalysed reaction is 2 Fe(III)-[cytochrome cL] + a primary alcohol = 2 Fe(II)-[cytochrome cL] + an aldehyde + 2 H(+). Catalyzes the oxidation of primary alcohols including methanol. The protein is Methanol dehydrogenase [cytochrome c] subunit 1 (moxF) of Methylobacterium organophilum.